The following is a 250-amino-acid chain: 2,3-bisphosphoglycerate-dependent phosphoglycerate mutase (250 aa).

Residues 12-19 (RHGQSAWN), 25-26 (TG), R64, 91-94 (ERHY), K102, 118-119 (RR), and 185-186 (GN) each bind substrate. H13 functions as the Tele-phosphohistidine intermediate in the catalytic mechanism. E91 acts as the Proton donor/acceptor in catalysis.

The protein belongs to the phosphoglycerate mutase family. BPG-dependent PGAM subfamily.

The enzyme catalyses (2R)-2-phosphoglycerate = (2R)-3-phosphoglycerate. It functions in the pathway carbohydrate degradation; glycolysis; pyruvate from D-glyceraldehyde 3-phosphate: step 3/5. In terms of biological role, catalyzes the interconversion of 2-phosphoglycerate and 3-phosphoglycerate. In Corynebacterium efficiens (strain DSM 44549 / YS-314 / AJ 12310 / JCM 11189 / NBRC 100395), this protein is 2,3-bisphosphoglycerate-dependent phosphoglycerate mutase.